We begin with the raw amino-acid sequence, 283 residues long: Protein/nucleic acid deglycase HchA (283 aa).

Histidine 86, glutamate 91, and histidine 123 together coordinate Zn(2+). The active-site Nucleophile is the cysteine 185.

It belongs to the peptidase C56 family. HchA subfamily. In terms of assembly, homodimer.

The protein resides in the cytoplasm. The catalysed reaction is N(omega)-(1-hydroxy-2-oxopropyl)-L-arginyl-[protein] + H2O = lactate + L-arginyl-[protein] + H(+). It catalyses the reaction N(6)-(1-hydroxy-2-oxopropyl)-L-lysyl-[protein] + H2O = lactate + L-lysyl-[protein] + H(+). The enzyme catalyses S-(1-hydroxy-2-oxopropyl)-L-cysteinyl-[protein] + H2O = lactate + L-cysteinyl-[protein] + H(+). It carries out the reaction N(omega)-(1-hydroxy-2-oxoethyl)-L-arginyl-[protein] + H2O = L-arginyl-[protein] + glycolate + H(+). The catalysed reaction is N(6)-(1-hydroxy-2-oxoethyl)-L-lysyl-[protein] + H2O = glycolate + L-lysyl-[protein] + H(+). It catalyses the reaction S-(1-hydroxy-2-oxoethyl)-L-cysteinyl-[protein] + H2O = glycolate + L-cysteinyl-[protein] + H(+). The enzyme catalyses N(2)-(1-hydroxy-2-oxopropyl)-dGTP + H2O = lactate + dGTP + H(+). It carries out the reaction N(2)-(1-hydroxy-2-oxopropyl)-GTP + H2O = lactate + GTP + H(+). The catalysed reaction is N(2)-(1-hydroxy-2-oxopropyl)-GDP + H2O = lactate + GDP + H(+). It catalyses the reaction N(2)-(1-hydroxy-2-oxopropyl)-GMP + H2O = lactate + GMP + H(+). The enzyme catalyses N(2)-(1-hydroxy-2-oxoethyl)-dGTP + H2O = dGTP + glycolate + H(+). It carries out the reaction N(2)-(1-hydroxy-2-oxoethyl)-GTP + H2O = glycolate + GTP + H(+). The catalysed reaction is N(2)-(1-hydroxy-2-oxoethyl)-GDP + H2O = glycolate + GDP + H(+). It catalyses the reaction N(2)-(1-hydroxy-2-oxoethyl)-GMP + H2O = glycolate + GMP + H(+). The enzyme catalyses an N(2)-(1-hydroxy-2-oxopropyl)-guanosine in RNA + H2O = a guanosine in RNA + lactate + H(+). It carries out the reaction an N(2)-(1-hydroxy-2-oxopropyl)-2'-deoxyguanosine in DNA + H2O = a 2'-deoxyguanosine in DNA + lactate + H(+). The catalysed reaction is an N(2)-(1-hydroxy-2-oxoethyl)-guanosine in RNA + H2O = a guanosine in RNA + glycolate + H(+). It catalyses the reaction an N(2)-(1-hydroxy-2-oxoethyl)-2'-deoxyguanosine in DNA + H2O = a 2'-deoxyguanosine in DNA + glycolate + H(+). In terms of biological role, protein and nucleotide deglycase that catalyzes the deglycation of the Maillard adducts formed between amino groups of proteins or nucleotides and reactive carbonyl groups of glyoxals. Thus, functions as a protein deglycase that repairs methylglyoxal- and glyoxal-glycated proteins, and releases repaired proteins and lactate or glycolate, respectively. Deglycates cysteine, arginine and lysine residues in proteins, and thus reactivates these proteins by reversing glycation by glyoxals. Acts on early glycation intermediates (hemithioacetals and aminocarbinols), preventing the formation of Schiff bases and advanced glycation endproducts (AGE). Also functions as a nucleotide deglycase able to repair glycated guanine in the free nucleotide pool (GTP, GDP, GMP, dGTP) and in DNA and RNA. Is thus involved in a major nucleotide repair system named guanine glycation repair (GG repair), dedicated to reversing methylglyoxal and glyoxal damage via nucleotide sanitization and direct nucleic acid repair. Plays an important role in protecting cells from carbonyl stress. The protein is Protein/nucleic acid deglycase HchA of Escherichia coli O139:H28 (strain E24377A / ETEC).